The sequence spans 63 residues: Kurtoxin-like II (63 aa).

The LCN-type CS-alpha/beta domain maps to Ile-2–Arg-62. Disulfide bonds link Cys-12/Cys-61, Cys-16/Cys-37, Cys-23/Cys-44, and Cys-27/Cys-46.

This sequence belongs to the long (4 C-C) scorpion toxin superfamily. Sodium channel inhibitor family. Alpha subfamily. In terms of tissue distribution, expressed by the venom gland.

The protein resides in the secreted. This neurotoxin acts on sodium and calcium channels. Potently inhibits native voltage-gated T-type calcium channel activity in mouse male germ cells. Also binds Cav3.1/CACNA1G, Cav3.2/CACNA1H, and Cav3.3/CACNA1I T-type calcium channels and inhibits the channels by modifying voltage-dependent gating. In addition, binds and significantly inhibits the inactivation of activated sodium channels (Nav1.2/SCN2A and Nav1.5/SCN5A). The sequence is that of Kurtoxin-like II from Parabuthus granulatus (Granulated thick-tailed scorpion).